Reading from the N-terminus, the 77-residue chain is Large ribosomal subunit protein bL28 (77 aa).

The protein belongs to the bacterial ribosomal protein bL28 family.

The sequence is that of Large ribosomal subunit protein bL28 from Polaromonas naphthalenivorans (strain CJ2).